A 397-amino-acid polypeptide reads, in one-letter code: Putative odorant receptor 83c (397 aa).

Over 1–39 (MSTSESPSSRFRELSKYINSLTNLLGVDFLSPKLKFNYR) the chain is Cytoplasmic. The helical transmembrane segment at 40–60 (TWTTIFAIANYTGFTVFTILN) threads the bilayer. Residues 61–70 (NGGDWRVGLK) are Extracellular-facing. The helical transmembrane segment at 71–90 (ASLMTGGLFHGLGKFLTCLL) threads the bilayer. The Cytoplasmic portion of the chain corresponds to 91–136 (KHQDMRRLVLYSQSIYDEYETRGDSYHRTLNSNIDRLLGIMKIIRN). A helical transmembrane segment spans residues 137–157 (GYVFAFCLMELLPLAMLMYDG). Over 158–186 (TRVTAMQYLIPGLPLENNYCYVVTYMIQT) the chain is Extracellular. Residues 187–207 (VTMLVQGVGFYSGDLFVFLGL) traverse the membrane as a helical segment. The Cytoplasmic portion of the chain corresponds to 208–282 (TQILTFADML…ALYYELIATQ (75 aa)). Residues 283–299 (VLSMALAMMLSFCINLS) traverse the membrane as a helical segment. The Extracellular segment spans residues 300–305 (SFHMPS). The helical transmembrane segment at 306-326 (AIFFVVSAYSMSIYCILGTIL) threads the bilayer. Over 327-365 (EFAYDQVYESICNVTWYELSGEQRKLFGFLLRESQYPHN) the chain is Cytoplasmic. Residues 366-386 (IQILGVMSLSVRTALQIVKLI) traverse the membrane as a helical segment. The Extracellular segment spans residues 387–397 (YSVSMMMMNRA).

The protein belongs to the insect chemoreceptor superfamily. Heteromeric odorant receptor channel (TC 1.A.69) family. Or67d subfamily. Interacts with Orco. Complexes exist early in the endomembrane system in olfactory sensory neurons (OSNs), coupling these complexes to the conserved ciliary trafficking pathway. Expressed in olfactory sensory neurons in the antenna.

The protein localises to the cell membrane. Functionally, odorant receptor which mediates acceptance or avoidance behavior, depending on its substrates. The odorant receptor repertoire encodes a large collection of odor stimuli that vary widely in identity, intensity, and duration. May form a complex with Orco to form odorant-sensing units, providing sensitive and prolonged odorant signaling and calcium permeability. The polypeptide is Putative odorant receptor 83c (Or83c) (Drosophila melanogaster (Fruit fly)).